The chain runs to 89 residues: Small ribosomal subunit protein uS15 (89 aa).

This sequence belongs to the universal ribosomal protein uS15 family. As to quaternary structure, part of the 30S ribosomal subunit. Forms a bridge to the 50S subunit in the 70S ribosome, contacting the 23S rRNA.

In terms of biological role, one of the primary rRNA binding proteins, it binds directly to 16S rRNA where it helps nucleate assembly of the platform of the 30S subunit by binding and bridging several RNA helices of the 16S rRNA. Forms an intersubunit bridge (bridge B4) with the 23S rRNA of the 50S subunit in the ribosome. In Frankia casuarinae (strain DSM 45818 / CECT 9043 / HFP020203 / CcI3), this protein is Small ribosomal subunit protein uS15.